Here is a 548-residue protein sequence, read N- to C-terminus: Chaperonin GroEL (548 aa).

ATP is bound by residues 29-32, Lys50, 86-90, Gly414, 478-480, and Asp494; these read TMGP, DGTTT, and NAA.

Belongs to the chaperonin (HSP60) family. In terms of assembly, forms a cylinder of 14 subunits composed of two heptameric rings stacked back-to-back. Interacts with the co-chaperonin GroES.

The protein resides in the cytoplasm. It catalyses the reaction ATP + H2O + a folded polypeptide = ADP + phosphate + an unfolded polypeptide.. In terms of biological role, together with its co-chaperonin GroES, plays an essential role in assisting protein folding. The GroEL-GroES system forms a nano-cage that allows encapsulation of the non-native substrate proteins and provides a physical environment optimized to promote and accelerate protein folding. May play a protective role against the defense mechanisms generated by the infected macrophages. This chain is Chaperonin GroEL, found in Legionella pneumophila subsp. pneumophila (strain Philadelphia 1 / ATCC 33152 / DSM 7513).